The chain runs to 298 residues: Probable oxidoreductase (298 aa).

9–33 (VVTGGASGLGAETVRALAAAGAEVT) provides a ligand contact to NAD(+). Serine 139 provides a ligand contact to substrate. Catalysis depends on tyrosine 165, which acts as the Proton acceptor.

This sequence belongs to the short-chain dehydrogenases/reductases (SDR) family.

The polypeptide is Probable oxidoreductase (Streptomyces antibioticus).